Reading from the N-terminus, the 497-residue chain is MGQLKPQKNVYAVIDLGSNSFHMLIAKSIAGGLQTIGRVKRKVRLAAGLDIDNVLSSEAMHRGWECLALFAERLQDIPKQNITIVATATLRLASNADVFKAQAEKILGHKVNVISGELEARTIYKGVAHTSSCTGSQLVIDIGGASTEVIIGKNFDALLYKSLNIGCVTYLERYFKDCKLSNANFNTAIKAARTVIDEIASEYKVKGWQIASGASGTVQAIQEIMIAQNLDELLTLEKLYTIKKQSIAYKTIAALDLPGLSEDRRLVFVSGLAILIALFESLEIEKMGLAGGALREGVLYSMLPELHNSDIRKRTIDGFIDRYHVDQKQASRVASLVLNLASEVNESWPIKALNGLPLLTAVAQLHEIGLLIEYKQYHKHSAYILKNTEMPGFSQSEHKVIVAVAKGHRSDLQKGYFDSLGANSVLAQYLVRLIRIAVILCMRRQDDVLPEFAITVKDDVLNLQFENDWLKNHPLMASELQQESKQQAKLGWKLIVN.

This sequence belongs to the GppA/Ppx family. GppA subfamily.

It carries out the reaction guanosine 3'-diphosphate 5'-triphosphate + H2O = guanosine 3',5'-bis(diphosphate) + phosphate + H(+). It participates in purine metabolism; ppGpp biosynthesis; ppGpp from GTP: step 2/2. Functionally, catalyzes the conversion of pppGpp to ppGpp. Guanosine pentaphosphate (pppGpp) is a cytoplasmic signaling molecule which together with ppGpp controls the 'stringent response', an adaptive process that allows bacteria to respond to amino acid starvation, resulting in the coordinated regulation of numerous cellular activities. The sequence is that of Guanosine-5'-triphosphate,3'-diphosphate pyrophosphatase from Pseudoalteromonas translucida (strain TAC 125).